Here is a 698-residue protein sequence, read N- to C-terminus: Methionine--tRNA ligase (698 aa).

A 'HIGH' region motif is present at residues 18-28 (PYANGDLHVGH). Zn(2+)-binding residues include Cys-149, Cys-152, Cys-161, and Cys-165. Position 350 (Thr-350) interacts with ATP. Positions 567 to 590 (EAADAGDEEGEDEDEEPPAADLEP) are disordered. Over residues 570–584 (DAGDEEGEDEDEEPP) the composition is skewed to acidic residues. The 99-residue stretch at 600–698 (DFQDLDIRVA…EDAEPGTKVQ (99 aa)) folds into the tRNA-binding domain.

It belongs to the class-I aminoacyl-tRNA synthetase family. MetG type 1 subfamily. In terms of assembly, homodimer. It depends on Zn(2+) as a cofactor.

It localises to the cytoplasm. It catalyses the reaction tRNA(Met) + L-methionine + ATP = L-methionyl-tRNA(Met) + AMP + diphosphate. Is required not only for elongation of protein synthesis but also for the initiation of all mRNA translation through initiator tRNA(fMet) aminoacylation. The sequence is that of Methionine--tRNA ligase from Natronomonas pharaonis (strain ATCC 35678 / DSM 2160 / CIP 103997 / JCM 8858 / NBRC 14720 / NCIMB 2260 / Gabara) (Halobacterium pharaonis).